A 476-amino-acid chain; its full sequence is Lactate utilization protein B 1 (476 aa).

2 consecutive 4Fe-4S ferredoxin-type domains span residues glycine 301–tyrosine 331 and tyrosine 350–leucine 379. Residues cysteine 310, cysteine 313, cysteine 316, cysteine 320, cysteine 363, cysteine 366, and cysteine 370 each coordinate [4Fe-4S] cluster.

Belongs to the LutB/YkgF family.

Its function is as follows. Is involved in L-lactate degradation and allows cells to grow with lactate as the sole carbon source. Has probably a role as an electron transporter during oxidation of L-lactate. The protein is Lactate utilization protein B 1 of Bacillus mycoides (strain KBAB4) (Bacillus weihenstephanensis).